We begin with the raw amino-acid sequence, 1115 residues long: Gamma tubulin complex adapter mto1 (1115 aa).

The interval 25-180 (LTDEEVRRIL…NYISSSLDQL (156 aa)) is disordered. 2 stretches are compositionally biased toward basic and acidic residues: residues 28–41 (EEVRRILSPRKEGS) and 56–71 (EASHKYDFEIDRDSLK). Composition is skewed to polar residues over residues 72–102 (SDSGSPRLHQNATAPTSSTPLQSPDESVNKL), 119–130 (DTTNFDRLNDNI), and 139–151 (PVLTANQGFQSQE). Ser94 bears the Phosphoserine mark. The span at 165–176 (SDPSSPNYISSS) shows a compositional bias: low complexity. Residues 445–915 (NEALLLRKQE…ERNSLIKNIV (471 aa)) adopt a coiled-coil conformation. The interval 523-537 (LMRMEQQWREDVDQL) is required for interaction with mto2. The span at 1001–1011 (GSTSSIPNSPR) shows a compositional bias: polar residues. Disordered regions lie at residues 1001–1037 (GSTSSIPNSPRASKRVSLDSEDKKLVPASPDKSAVQR) and 1067–1115 (EQEG…QEHK). Phosphoserine occurs at positions 1005 and 1009. Basic and acidic residues-rich tracts occupy residues 1016–1025 (VSLDSEDKKL) and 1067–1084 (EQEGRKRDKLGARERLQD). A coiled-coil region spans residues 1072-1102 (KRDKLGARERLQDLIRQNRSLSRQIKTDKES). Composition is skewed to polar residues over residues 1086-1095 (IRQNRSLSRQ) and 1104-1115 (SRSPSISSQEHK).

Interacts with mto2; the interaction is direct and required for efficient binding to the gamma-tubulin complex. Interacts with gamma tubulin complex subunits alp4, alp6 and gtb1. Interacts with mcp6.

It localises to the cytoplasm. It is found in the cytoskeleton. The protein localises to the microtubule organizing center. Its subcellular location is the spindle pole body. Its function is as follows. Spindle pole body (SPB) component that acts as the gamma-tubulin complex-binding protein of the SPB outer plaque. Promotes nucleation of all cytoplasmic microtubules by recruiting the gamma-tubulin complex to the spindle pole body (SPB), to the interphase microtubule organizing center (iMTOC), and to the equatorial MTOC (eMTOC) during anaphase. This Schizosaccharomyces pombe (strain 972 / ATCC 24843) (Fission yeast) protein is Gamma tubulin complex adapter mto1.